Here is a 341-residue protein sequence, read N- to C-terminus: L-threonine 3-dehydrogenase (341 aa).

C38 contacts Zn(2+). Active-site charge relay system residues include T40 and H43. The Zn(2+) site is built by H63, E64, C93, C96, C99, and C107. NAD(+) contacts are provided by residues I175, D195, R200, 262-264 (LGI), and 286-287 (IY).

The protein belongs to the zinc-containing alcohol dehydrogenase family. In terms of assembly, homotetramer. The cofactor is Zn(2+).

It localises to the cytoplasm. The catalysed reaction is L-threonine + NAD(+) = (2S)-2-amino-3-oxobutanoate + NADH + H(+). It participates in amino-acid degradation; L-threonine degradation via oxydo-reductase pathway; glycine from L-threonine: step 1/2. Its function is as follows. Catalyzes the NAD(+)-dependent oxidation of L-threonine to 2-amino-3-ketobutyrate. The chain is L-threonine 3-dehydrogenase from Escherichia coli O127:H6 (strain E2348/69 / EPEC).